Consider the following 260-residue polypeptide: tRNA pseudouridine synthase A (260 aa).

Asp-52 serves as the catalytic Nucleophile. Position 111 (Tyr-111) interacts with substrate.

This sequence belongs to the tRNA pseudouridine synthase TruA family. Homodimer.

The enzyme catalyses uridine(38/39/40) in tRNA = pseudouridine(38/39/40) in tRNA. Functionally, formation of pseudouridine at positions 38, 39 and 40 in the anticodon stem and loop of transfer RNAs. The sequence is that of tRNA pseudouridine synthase A from Roseobacter denitrificans (strain ATCC 33942 / OCh 114) (Erythrobacter sp. (strain OCh 114)).